A 221-amino-acid polypeptide reads, in one-letter code: Adenylate kinase (221 aa).

10-15 (GAGKGT) contacts ATP. The NMP stretch occupies residues 30-59 (STGDMLRAAVKAGTPLGVEAKKVMDAGGLV). AMP contacts are provided by residues threonine 31, arginine 36, 57–59 (GLV), 85–88 (GFPR), and glutamine 92. The interval 122–159 (GRRVHVASGRTYHLKYNPPKTEGVDDETGEPLIQRDDD) is LID. ATP-binding positions include arginine 123 and 132-133 (TY). Positions 138-159 (NPPKTEGVDDETGEPLIQRDDD) are disordered. AMP contacts are provided by arginine 156 and arginine 167. An ATP-binding site is contributed by glycine 207.

Belongs to the adenylate kinase family. As to quaternary structure, monomer.

It is found in the cytoplasm. The enzyme catalyses AMP + ATP = 2 ADP. It participates in purine metabolism; AMP biosynthesis via salvage pathway; AMP from ADP: step 1/1. In terms of biological role, catalyzes the reversible transfer of the terminal phosphate group between ATP and AMP. Plays an important role in cellular energy homeostasis and in adenine nucleotide metabolism. This is Adenylate kinase from Cupriavidus taiwanensis (strain DSM 17343 / BCRC 17206 / CCUG 44338 / CIP 107171 / LMG 19424 / R1) (Ralstonia taiwanensis (strain LMG 19424)).